Consider the following 435-residue polypeptide: Flavonol 7-O-rhamnosyltransferase (435 aa).

Gln-18 provides a ligand contact to UDP. Position 18 (Gln-18) interacts with UDP-beta-L-rhamnose. The active-site Proton acceptor is the His-21. His-21 is a quercetin binding site. Residue Asp-119 is the Charge relay of the active site. UDP is bound by residues Ser-250, Ala-315, His-332, Gly-336, Ser-337, and Glu-340. Positions 250, 315, 332, 336, 337, and 340 each coordinate UDP-beta-L-rhamnose.

Belongs to the UDP-glycosyltransferase family. Highly expressed in floral buds. Expressed in stems, leaves and flowers. Expressed at low levels in roots and siliques. Expressed on the adaxial side of cotyledons and emerging leaves, in trichomes, root columella cells, and the late elongation/early differentiation zone of roots.

It carries out the reaction quercitrin + UDP-beta-L-rhamnose = quercetin 3,7-bis-O-alpha-L-rhamnoside + UDP + H(+). The enzyme catalyses quercetin 3-O-beta-D-glucoside + UDP-beta-L-rhamnose = quercetin 3-O-beta-D-glucoside-7-O-alpha-L-rhamnoside + UDP + H(+). It functions in the pathway flavonoid metabolism. In terms of biological role, flavonol 7-O-rhamnosyltransferase that catalyzes the transfer of rhamnose from UDP-rhamnose to the 7-OH position of 3-O-glycosylated flavonols, such as kaempferol 3-O-rhamnoside, kaempferol 3-O-glucoside, quercetin 3-O-glucoside, quercetin 3-O-galactoside, quercetin 3-O-rhamnoside and isorhamnetin 3-O-glucoside. Is able to glycosylate the flavonols quercetin and kaempferol to yield quercetin 7-O-rhamnoside and kaempferol 7-O-rhamnoside. Shows a strict specificity for UDP-rhamnose as sugar donor. Does not act on 3-O-glycosylated anthocyanins. The accumulation of kaempferol 3-O-rhamnoside-7-O-rhamnoside inhibits basipetal auxin transport, which influences auxin distribution and plant organ development. This chain is Flavonol 7-O-rhamnosyltransferase, found in Arabidopsis thaliana (Mouse-ear cress).